Reading from the N-terminus, the 411-residue chain is Floricaula/leafy-like protein (411 aa).

The disordered stretch occupies residues 220 to 259; the sequence is PDTNYGSEQTKACKKQKRRRSKDSGEDGEERQREHPFIVT. Over residues 231–240 the composition is skewed to basic residues; the sequence is ACKKQKRRRS. The span at 241–255 shows a compositional bias: basic and acidic residues; the sequence is KDSGEDGEERQREHP. DNA-binding regions lie at residues 252–256, 321–328, and 392–395; these read REHPF, NKPKMRHY, and YVPT.

It belongs to the FLO/LFY family. In terms of tissue distribution, expressed in vegetative buds and male cones but not in female cones, vascular tissue, roots or secondary needles.

The protein resides in the nucleus. Its function is as follows. Probable transcription factor. The chain is Floricaula/leafy-like protein (FLL) from Pinus radiata (Monterey pine).